The sequence spans 401 residues: Leucine aminopeptidase 1 (401 aa).

The N-terminal stretch at 1–18 (MKVAKASLLTILAHSVSA) is a signal peptide. Positions 19-87 (RFLAEDEINR…GATRLRTKTK (69 aa)) are excised as a propeptide. Asparagine 179 carries an N-linked (GlcNAc...) asparagine glycan. Histidine 187, aspartate 206, glutamate 245, and aspartate 272 together coordinate Zn(2+). Cysteine 321 and cysteine 325 form a disulfide bridge. Histidine 354 provides a ligand contact to Zn(2+).

Belongs to the peptidase M28 family. M28E subfamily. In terms of assembly, monomer. It depends on Zn(2+) as a cofactor.

Its subcellular location is the secreted. Functionally, extracellular aminopeptidase that allows assimilation of proteinaceous substrates. In Colletotrichum graminicola (strain M1.001 / M2 / FGSC 10212) (Maize anthracnose fungus), this protein is Leucine aminopeptidase 1 (LAP1).